A 39-amino-acid chain; its full sequence is MDLDFRVLVVLLPVLLAGGWALKNILPAALRQVQSFFSK.

A helical membrane pass occupies residues 7 to 25 (VLVVLLPVLLAGGWALKNI).

The protein belongs to the PsbY family. As to quaternary structure, PSII is composed of 1 copy each of membrane proteins PsbA, PsbB, PsbC, PsbD, PsbE, PsbF, PsbH, PsbI, PsbJ, PsbK, PsbL, PsbM, PsbT, PsbX, PsbY, PsbZ, Psb30/Ycf12, peripheral proteins PsbO, CyanoQ (PsbQ), PsbU, PsbV and a large number of cofactors. It forms dimeric complexes.

It is found in the cellular thylakoid membrane. Loosely associated component of the core of photosystem II (PSII), it is not always seen in crystals. PSII is a light-driven water plastoquinone oxidoreductase, using light energy to abstract electrons from H(2)O, generating a proton gradient subsequently used for ATP formation. The chain is Photosystem II reaction center protein Y from Cyanothece sp. (strain PCC 7425 / ATCC 29141).